Consider the following 120-residue polypeptide: UPF0102 protein COXBURSA331_A1934 (120 aa).

It belongs to the UPF0102 family.

This chain is UPF0102 protein COXBURSA331_A1934, found in Coxiella burnetii (strain RSA 331 / Henzerling II).